Consider the following 279-residue polypeptide: Tryptophan synthase alpha chain (279 aa).

Residues E50 and D61 each act as proton acceptor in the active site.

The protein belongs to the TrpA family. Tetramer of two alpha and two beta chains.

It catalyses the reaction (1S,2R)-1-C-(indol-3-yl)glycerol 3-phosphate + L-serine = D-glyceraldehyde 3-phosphate + L-tryptophan + H2O. The protein operates within amino-acid biosynthesis; L-tryptophan biosynthesis; L-tryptophan from chorismate: step 5/5. The alpha subunit is responsible for the aldol cleavage of indoleglycerol phosphate to indole and glyceraldehyde 3-phosphate. This chain is Tryptophan synthase alpha chain, found in Mesorhizobium japonicum (strain LMG 29417 / CECT 9101 / MAFF 303099) (Mesorhizobium loti (strain MAFF 303099)).